Consider the following 120-residue polypeptide: uncharacterized protein (120 aa).

An N-terminal signal peptide occupies residues methionine 1 to alanine 18. The disordered stretch occupies residues alanine 20–leucine 99.

This is an uncharacterized protein from Caenorhabditis elegans.